A 200-amino-acid polypeptide reads, in one-letter code: Histone chaperone asf1b (200 aa).

It belongs to the ASF1 family. In terms of assembly, interacts with histone H3 and histone H4.

It is found in the nucleus. Histone chaperone that facilitates histone deposition and histone exchange and removal during nucleosome assembly and disassembly. In Xenopus tropicalis (Western clawed frog), this protein is Histone chaperone asf1b (asf1b).